A 349-amino-acid chain; its full sequence is Aspartate carbamoyltransferase catalytic subunit (349 aa).

Arg-59 and Thr-60 together coordinate carbamoyl phosphate. Residue Lys-87 coordinates L-aspartate. Residues Arg-109, His-142, and Gln-145 each contribute to the carbamoyl phosphate site. Arg-182 and Arg-253 together coordinate L-aspartate. Carbamoyl phosphate contacts are provided by Gly-294 and Pro-295.

Belongs to the aspartate/ornithine carbamoyltransferase superfamily. ATCase family. In terms of assembly, heterododecamer (2C3:3R2) of six catalytic PyrB chains organized as two trimers (C3), and six regulatory PyrI chains organized as three dimers (R2).

It carries out the reaction carbamoyl phosphate + L-aspartate = N-carbamoyl-L-aspartate + phosphate + H(+). It functions in the pathway pyrimidine metabolism; UMP biosynthesis via de novo pathway; (S)-dihydroorotate from bicarbonate: step 2/3. Catalyzes the condensation of carbamoyl phosphate and aspartate to form carbamoyl aspartate and inorganic phosphate, the committed step in the de novo pyrimidine nucleotide biosynthesis pathway. This Synechococcus sp. (strain CC9902) protein is Aspartate carbamoyltransferase catalytic subunit.